Consider the following 522-residue polypeptide: F-box only protein 7 (522 aa).

Residues methionine 1–proline 87 are ubiquitin-like. The segment covering serine 88–valine 132 has biased composition (polar residues). The tract at residues serine 88–proline 151 is disordered. The tract at residues valine 91–threonine 128 is important for interaction with PINK1. The important for interaction with CDK6 stretch occupies residues threonine 128–methionine 168. The important for dimerization and interaction with PSMF1 stretch occupies residues proline 179–leucine 323. The region spanning valine 328–leucine 374 is the F-box domain. The interval arginine 380–methionine 522 is important for interaction with CDK6. 2 positions are modified to omega-N-methylarginine: arginine 431 and arginine 451. An RFDP motif motif is present at residues arginine 481–proline 484. Residues proline 484 to methionine 522 form a disordered region. Position 518 is an asymmetric dimethylarginine (arginine 518).

Part of the SCF (SKP1-CUL1-F-box) E3 ubiquitin-protein ligase complex SCF(FBXO7) formed of CUL1, SKP1, RBX1 and FBXO7. Interacts via its C-terminal proline-rich region with DLGAP5. Interacts with BIRC2. Interacts with CDK6 and promotes its interaction with D-type cyclin. Interacts (via the N-terminal Ubl domain) with PRKN. Interacts (via N-terminal region) with PINK1. Interacts with PSMF1.

The protein resides in the cytoplasm. Its subcellular location is the nucleus. It is found in the mitochondrion. It localises to the cytosol. It functions in the pathway protein modification; protein ubiquitination. Substrate recognition component of a SCF (SKP1-CUL1-F-box protein) E3 ubiquitin-protein ligase complex which mediates the ubiquitination and subsequent proteasomal degradation of target proteins and plays a role in several biological processes such as cell cycle, cell proliferation, or maintenance of chromosome stability. Recognizes and ubiquitinates BIRC2 and the cell cycle regulator DLGAP5. Plays a role downstream of PINK1 in the clearance of damaged mitochondria via selective autophagy (mitophagy) by targeting PRKN to dysfunctional depolarized mitochondria. Promotes MFN1 ubiquitination. Mediates the ubiquitination and proteasomal degradation of UXT isoform 2, thereby impairing the NF-kappa-B signaling pathway. Inhibits NF-kappa-B pathway also by promoting the ubiquitinatioin of TRAF2. Affects the assembly state and activity of the proteasome in the cells including neurons by ubiquitinating the proteasomal subunit PSMA2 via 'Lys-63'-linked polyubiquitin chains. Promotes 'Lys-48'-linked polyubiquitination SIRT7, leading to the hydrogen peroxide-induced cell death. The protein is F-box only protein 7 (FBXO7) of Bos taurus (Bovine).